The sequence spans 147 residues: Putative HTH-type transcriptional regulator slr0846 (147 aa).

In terms of domain architecture, HTH rrf2-type spans 2–130; the sequence is KLTTKSHYSV…YSITLADLYY (129 aa).

The chain is Putative HTH-type transcriptional regulator slr0846 from Synechocystis sp. (strain ATCC 27184 / PCC 6803 / Kazusa).